The primary structure comprises 157 residues: Acetyltransferase PseH (157 aa).

The 148-residue stretch at 5–152 (KNFAELNSQE…YYVCLKQSHC (148 aa)) folds into the N-acetyltransferase domain.

Functionally, catalyzes the third step in the biosynthesis of pseudaminic acid, a sialic-acid-like sugar that is used to modify flagellin. Mediates N-4 acetylation of UDP-4-amino-4,6-dideoxy-beta-L-AltNAc to form UDP-2,4-diacetamido-2,4,6-trideoxy-beta-L-altropyranose. The chain is Acetyltransferase PseH (pseH) from Campylobacter jejuni subsp. jejuni serotype O:2 (strain ATCC 700819 / NCTC 11168).